We begin with the raw amino-acid sequence, 265 residues long: Indole-3-glycerol phosphate synthase (265 aa).

The protein belongs to the TrpC family.

It carries out the reaction 1-(2-carboxyphenylamino)-1-deoxy-D-ribulose 5-phosphate + H(+) = (1S,2R)-1-C-(indol-3-yl)glycerol 3-phosphate + CO2 + H2O. It functions in the pathway amino-acid biosynthesis; L-tryptophan biosynthesis; L-tryptophan from chorismate: step 4/5. This chain is Indole-3-glycerol phosphate synthase, found in Xanthomonas euvesicatoria pv. vesicatoria (strain 85-10) (Xanthomonas campestris pv. vesicatoria).